The chain runs to 288 residues: Phenazine biosynthesis-like domain-containing protein (288 aa).

Glu-46 is a catalytic residue.

Belongs to the PhzF family. Interacts with UNRIP/MAWD.

The polypeptide is Phenazine biosynthesis-like domain-containing protein (PBLD) (Bos taurus (Bovine)).